The chain runs to 181 residues: UPF0398 protein LMHCC_0668 (181 aa).

Belongs to the UPF0398 family.

This chain is UPF0398 protein LMHCC_0668, found in Listeria monocytogenes serotype 4a (strain HCC23).